The primary structure comprises 782 residues: ATP-dependent 6-phosphofructokinase, muscle type (782 aa).

Thr2 is modified (N-acetylthreonine). Positions 2-390 (THEEHHAAKT…NWEVYKLLAH (389 aa)) are N-terminal catalytic PFK domain 1. ATP is bound by residues Gly25, 88–89 (RC), and 118–121 (GDGS). Asp119 is a Mg(2+) binding site. Phosphoserine is present on Ser133. Residues 164–166 (SID), Arg201, 208–210 (MGR), Glu264, Arg292, and 298–301 (HVQR) contribute to the substrate site. The active-site Proton acceptor is the Asp166. A Phosphoserine modification is found at Ser377. An interdomain linker region spans residues 391 to 403 (IRPPVSKTSATMH). A C-terminal regulatory PFK domain 2 region spans residues 404-782 (TVAVMNVGAP…SRKRSGETSI (379 aa)). Beta-D-fructose 2,6-bisphosphate is bound by residues Arg473 and 530-534 (TVSNN). A glycan (O-linked (GlcNAc) serine) is linked at Ser532. Lys559 carries the post-translational modification N6-(2-hydroxyisobutyryl)lysine. Beta-D-fructose 2,6-bisphosphate is bound by residues Arg568, 575-577 (MGG), Glu631, Arg657, and 663-666 (HMQQ). Ser669 carries the phosphoserine modification. Residue Arg737 participates in beta-D-fructose 2,6-bisphosphate binding. Phosphoserine is present on Ser777.

It belongs to the phosphofructokinase type A (PFKA) family. ATP-dependent PFK group I subfamily. Eukaryotic two domain clade 'E' sub-subfamily. In terms of assembly, homo- and heterotetramers. Phosphofructokinase (PFK) enzyme functions as a tetramer composed of different combinations of 3 types of subunits, called PFKM (M), PFKL (L) and PFKP (P). The composition of the PFK tetramer differs according to the tissue type it is present in. The kinetic and regulatory properties of the tetrameric enzyme are dependent on the subunit composition, hence can vary across tissues. Interacts (via C-terminus) with HK1 (via N-terminal spermatogenic cell-specific region). Requires Mg(2+) as cofactor. Post-translationally, glcNAcylation decreases enzyme activity.

It localises to the cytoplasm. It carries out the reaction beta-D-fructose 6-phosphate + ATP = beta-D-fructose 1,6-bisphosphate + ADP + H(+). It functions in the pathway carbohydrate degradation; glycolysis; D-glyceraldehyde 3-phosphate and glycerone phosphate from D-glucose: step 3/4. With respect to regulation, allosterically activated by ADP, AMP, or fructose 2,6-bisphosphate, and allosterically inhibited by ATP or citrate. Its function is as follows. Catalyzes the phosphorylation of D-fructose 6-phosphate to fructose 1,6-bisphosphate by ATP, the first committing step of glycolysis. The sequence is that of ATP-dependent 6-phosphofructokinase, muscle type (PFKM) from Canis lupus familiaris (Dog).